Here is a 150-residue protein sequence, read N- to C-terminus: Transcriptional repressor NrdR (150 aa).

A zinc finger lies at 3 to 34 (CPFCGYEETKVLDSRPVSNGTSIRRRRECLQC). One can recognise an ATP-cone domain in the interval 49 to 139 (IRIIKKDGRR…VYKEFRDLDS (91 aa)).

Belongs to the NrdR family. Requires Zn(2+) as cofactor.

In terms of biological role, negatively regulates transcription of bacterial ribonucleotide reductase nrd genes and operons by binding to NrdR-boxes. The chain is Transcriptional repressor NrdR from Petrotoga mobilis (strain DSM 10674 / SJ95).